The chain runs to 554 residues: Hyaluronan synthase 3 (554 aa).

Residues 1 to 15 (MPVQLTTALRVVGTS) lie on the Cytoplasmic side of the membrane. A helical membrane pass occupies residues 16–36 (LFALVVLGGILAAYVTGYQFI). At 37–44 (HTEKHYLS) the chain is on the extracellular side. A helical transmembrane segment spans residues 45 to 65 (FGLYGAILGLHLLIQSLFAFL). At 66-378 (EHRRMRRAGR…NSLWFHKHHL (313 aa)) the chain is on the cytoplasmic side. A helical transmembrane segment spans residues 379–399 (WMTYESVVTGFFPFFLIATVI). The Extracellular segment spans residues 400–409 (QLFYRGRIWN). A helical membrane pass occupies residues 410–430 (ILLFLLTVQLVGIIKATYACF). The Cytoplasmic portion of the chain corresponds to 431-441 (LRGNAEMIFMS). Residues 442–462 (LYSLLYMSSLLPAKIFAIATI) form a helical membrane-spanning segment. Asparagine 463 carries an N-linked (GlcNAc...) asparagine glycan. The Extracellular segment spans residues 463–474 (NKSGWGTSGRKT). A helical membrane pass occupies residues 475–495 (IVVNFIGLIPVSIWVAVLLGG). Topologically, residues 496–516 (LAYTAYCQDLFSETELAFLVS) are cytoplasmic. Residues 517–537 (GAILYGCYWVALLMLYLAIIA) form a helical membrane-spanning segment. Residues 538 to 554 (RRCGKKPEQYSLAFAEV) are Extracellular-facing.

This sequence belongs to the NodC/HAS family. Mg(2+) serves as cofactor. Post-translationally, O-GlcNAcylation increases the hyaluronan synthase activity, HAS3 stability and its plasma membrane residence. The concentration of UDP-GlcNAc controls the level of O-GlcNAc modification.

It is found in the cell membrane. It localises to the golgi apparatus membrane. Its subcellular location is the golgi apparatus. The protein localises to the trans-Golgi network membrane. The protein resides in the cytoplasmic vesicle. The enzyme catalyses [hyaluronan](n) + UDP-N-acetyl-alpha-D-glucosamine = N-acetyl-beta-D-glucosaminyl-(1-&gt;4)-[hyaluronan](n) + UDP + H(+). The catalysed reaction is N-acetyl-beta-D-glucosaminyl-(1-&gt;4)-[hyaluronan](n) + UDP-alpha-D-glucuronate = [hyaluronan](n+1) + UDP + H(+). It participates in glycan biosynthesis; hyaluronan biosynthesis. Its function is as follows. Catalyzes the addition of GlcNAc or GlcUA monosaccharides to the nascent hyaluronan polymer. Therefore, it is essential to hyaluronan synthesis a major component of most extracellular matrices that has a structural role in tissues architectures and regulates cell adhesion, migration and differentiation. This is one of three isoenzymes responsible for cellular hyaluronan synthesis. The polypeptide is Hyaluronan synthase 3 (Has3) (Mus musculus (Mouse)).